We begin with the raw amino-acid sequence, 165 residues long: Protein NKG7 (165 aa).

4 helical membrane-spanning segments follow: residues 9–29 (LFAGSLGLTSSLIALTTDFWI), 61–81 (FCILAVLWGLVSVSFLILSCI), 92–112 (LVSTVMAFSAALSILVAMAVY), and 133–153 (FYLGWVSFILFLFAGCLSLGA).

This sequence belongs to the PMP-22/EMP/MP20 family. As to expression, predominantly expressed by leukocytes with cytotoxic activity such as CD8(+) T-cells and natural killer cells.

Its subcellular location is the cell membrane. It is found in the cytolytic granule membrane. Its function is as follows. Regulates cytotoxic granule exocytosis in effector lymphocytes, thus acting as a critical mediator of inflammation in a broad range of infectious and non-infectious diseases. Essential for cytotoxic degranulation of natural killer (NK) cells and CD8(+) T-cells and for the activation of CD4(+) T-cells following infection. Plays a critical role in CD8(+) T-cell and NK cell-mediated cytolysis of target cells and contributes to the cytolytic activity via the perforin/granzyme pathway by enhancing exocytosis of LAMP1-carrying lytic granules. Contributes to NK cell-mediated control of cancer metastasis. The polypeptide is Protein NKG7 (Nkg7) (Mus musculus (Mouse)).